Here is a 420-residue protein sequence, read N- to C-terminus: Glucose-1-phosphate adenylyltransferase (420 aa).

Alpha-D-glucose 1-phosphate is bound by residues tyrosine 107, glycine 173, 188–189, and serine 206; that span reads EK.

This sequence belongs to the bacterial/plant glucose-1-phosphate adenylyltransferase family. Homotetramer.

The enzyme catalyses alpha-D-glucose 1-phosphate + ATP + H(+) = ADP-alpha-D-glucose + diphosphate. It functions in the pathway glycan biosynthesis; glycogen biosynthesis. In terms of biological role, involved in the biosynthesis of ADP-glucose, a building block required for the elongation reactions to produce glycogen. Catalyzes the reaction between ATP and alpha-D-glucose 1-phosphate (G1P) to produce pyrophosphate and ADP-Glc. The sequence is that of Glucose-1-phosphate adenylyltransferase from Shewanella baltica (strain OS155 / ATCC BAA-1091).